Consider the following 514-residue polypeptide: Phospholipase C D (514 aa).

Positions 1 to 37 (MSQSHIGGVSRREFLAKVAAGGAGALMSFAGPVIEKA) form a signal peptide, tat-type signal. The disordered stretch occupies residues 492–514 (VPDPQIMPTQETTPTRGIPSGPC).

This sequence belongs to the bacterial phospholipase C family. Post-translationally, predicted to be exported by the Tat system. The position of the signal peptide cleavage has not been experimentally proven.

The protein localises to the secreted. The protein resides in the cell wall. The enzyme catalyses a 1,2-diacyl-sn-glycero-3-phosphocholine + H2O = phosphocholine + a 1,2-diacyl-sn-glycerol + H(+). In terms of biological role, involved in virulence. Induces cytotoxic effects on mouse macrophage cell lines, via direct or indirect enzymatic hydrolysis of cell membrane phospholipids. Hydrolyzes phosphatidylcholine. In Mycobacterium tuberculosis (strain CDC 1551 / Oshkosh), this protein is Phospholipase C D.